We begin with the raw amino-acid sequence, 96 residues long: Large ribosomal subunit protein eL21 (96 aa).

The interval 1–22 (MRKSKGFKSRSRYKLKRSIRPK) is disordered.

It belongs to the eukaryotic ribosomal protein eL21 family.

The protein is Large ribosomal subunit protein eL21 of Methanosphaera stadtmanae (strain ATCC 43021 / DSM 3091 / JCM 11832 / MCB-3).